A 2053-amino-acid polypeptide reads, in one-letter code: Nonribosomal peptide synthetase pboA (2053 aa).

Positions 16 to 402 (ACRDNADRPA…GRRDRVAKVR (387 aa)) are adenylation 1. Residues 503-579 (RSYASVDEVI…HLITVCRERR (77 aa)) enclose the Carrier 1 domain. S540 is subject to O-(pantetheine 4'-phosphoryl)serine. Residues 611 to 896 (NDPSLYCVKH…LLQSVHRTVQ (286 aa)) are condensation 1. The tract at residues 1034–1418 (SAAARNPTNI…GRRDRQVKLR (385 aa)) is adenylation 2. In terms of domain architecture, Carrier 2 spans 1515-1593 (VPDTSVKKII…DIVALVEGKI (79 aa)). An O-(pantetheine 4'-phosphoryl)serine modification is found at S1553. Positions 1630–1981 (NSQCQSGFNV…LQLRLEYDSD (352 aa)) are condensation 2.

It belongs to the NRP synthetase family. Pantetheine 4'-phosphate serves as cofactor.

Its pathway is secondary metabolite biosynthesis. Its function is as follows. Nonribosomal peptide synthetase; part of the gene cluster that mediates the biosynthesis of protubonine B, a hydroxylated and diacetylated cyclo-L-Trp-L-Leu derivative. The first step of the protubonine B synthesis is performed by the nonribosomal peptide synthetase pboA that catalyzes the formation of cyclo-L-Trp-L-Leu by condensing L-Leu with L-Trp. The flavin-dependent monooxygenase pboD is responsible for hydroxylation at C-3 of the indole ring and subsequent formation of the pyrrolidine ring, leadind to protubonine D. Protubonine D is further diacetylated by two acetyltransferases, pboB and pboC, to form the final product protubonine B via protubonine C. The polypeptide is Nonribosomal peptide synthetase pboA (Aspergillus ustus).